We begin with the raw amino-acid sequence, 791 residues long: GDH/6PGL endoplasmic bifunctional protein (791 aa).

The N-terminal stretch at Met-1–Ala-19 is a signal peptide. A Pyrrolidone carboxylic acid modification is found at Gln-20. A hexose-6-phosphate dehydrogenase region spans residues Gln-20–Gln-526. NADP(+) contacts are provided by residues Gly-32–Lys-39 and Tyr-149. N-linked (GlcNAc...) asparagine glycosylation occurs at Asn-157. Lys-174 serves as a coordination point for NADP(+). Residues Lys-174, His-204–Lys-208, Glu-243, and Asp-262 each bind D-glucose 6-phosphate. The residue at position 208 (Lys-208) is an N6-succinyllysine. The Proton acceptor role is filled by His-267. Residue Asn-282 is glycosylated (N-linked (GlcNAc...) asparagine). D-glucose 6-phosphate-binding residues include Lys-360 and Arg-365. Arg-370 provides a ligand contact to NADP(+). The segment at Pro-527–Pro-540 is linker. The interval Ser-541–Gly-791 is 6-phosphogluconolactonase. Trp-617 is a binding site for NADP(+). N-linked (GlcNAc...) asparagine glycosylation occurs at Asn-683.

It in the N-terminal section; belongs to the glucose-6-phosphate dehydrogenase family. In the C-terminal section; belongs to the glucosamine/galactosamine-6-phosphate isomerase family. 6-phosphogluconolactonase subfamily. As to quaternary structure, homodimer. Present in most tissues examined, strongest in liver.

The protein resides in the endoplasmic reticulum lumen. The catalysed reaction is D-glucose 6-phosphate + NADP(+) = 6-phospho-D-glucono-1,5-lactone + NADPH + H(+). It catalyses the reaction D-glucose 6-phosphate + NAD(+) = 6-phospho-D-glucono-1,5-lactone + NADH + H(+). The enzyme catalyses 6-phospho-D-glucono-1,5-lactone + H2O = 6-phospho-D-gluconate + H(+). It carries out the reaction 2-deoxy-D-glucose 6-phosphate + NAD(+) = 2-deoxy-6-phospho-D-glucono-1,5-lactone + NADH + H(+). The catalysed reaction is 2-deoxy-D-glucose 6-phosphate + NADP(+) = 2-deoxy-6-phospho-D-glucono-1,5-lactone + NADPH + H(+). It catalyses the reaction D-galactose 6-phosphate + NADP(+) = 6-phospho-D-galactono-1,5-lactone + NADPH + H(+). The enzyme catalyses D-galactose 6-phosphate + NAD(+) = 6-phospho-D-galactono-1,5-lactone + NADH + H(+). It carries out the reaction D-glucosamine 6-phosphate + NADP(+) = 2-amino-2-deoxy-6-phospho-D-glucono-1,5-lactone + NADPH + 2 H(+). The catalysed reaction is D-glucose + NAD(+) = D-glucono-1,5-lactone + NADH + H(+). It catalyses the reaction D-glucose + NADP(+) = D-glucono-1,5-lactone + NADPH + H(+). The enzyme catalyses D-glucose 6-sulfate + NADP(+) = 6-sulfo-D-glucono-1,5-lactone + NADPH + H(+). The protein operates within carbohydrate degradation; pentose phosphate pathway; D-ribulose 5-phosphate from D-glucose 6-phosphate (oxidative stage): step 1/3. Its pathway is carbohydrate degradation; pentose phosphate pathway; D-ribulose 5-phosphate from D-glucose 6-phosphate (oxidative stage): step 2/3. It participates in carbohydrate degradation; pentose phosphate pathway; D-ribulose 5-phosphate from D-glucose 6-phosphate (oxidative stage). In terms of biological role, bifunctional enzyme localized in the lumen of the endoplasmic reticulum that catalyzes the first two steps of the oxidative branch of the pentose phosphate pathway/shunt, an alternative to glycolysis and a major source of reducing power and metabolic intermediates for biosynthetic processes. Has a hexose-6-phosphate dehydrogenase activity, with broad substrate specificity compared to glucose-6-phosphate 1-dehydrogenase/G6PD, and catalyzes the first step of the pentose phosphate pathway. In addition, acts as a 6-phosphogluconolactonase and catalyzes the second step of the pentose phosphate pathway. May have a dehydrogenase activity for alternative substrates including glucosamine 6-phosphate and glucose 6-sulfate. The main function of this enzyme is to provide reducing equivalents such as NADPH to maintain the adequate levels of reductive cofactors in the oxidizing environment of the endoplasmic reticulum. By producing NADPH that is needed by reductases of the lumen of the endoplasmic reticulum like corticosteroid 11-beta-dehydrogenase isozyme 1/HSD11B1, indirectly regulates their activity. This chain is GDH/6PGL endoplasmic bifunctional protein, found in Homo sapiens (Human).